The primary structure comprises 542 residues: Heterogeneous nuclear ribonucleoprotein L-like (542 aa).

A disordered region spans residues 1–71 (MSSSSSSPRE…QPEAGGSHHK (71 aa)). Residues 18 to 29 (YESQAKRLKTEE) show a composition bias toward basic and acidic residues. K26 participates in a covalent cross-link: Glycyl lysine isopeptide (Lys-Gly) (interchain with G-Cter in SUMO2). S35 carries the phosphoserine modification. T46 is modified (phosphothreonine). Positions 48 to 58 (RGGGDGGGGGR) are enriched in gly residues. Phosphoserine occurs at positions 59, 68, and 75. 3 consecutive RRM domains span residues 76–150 (PVVH…YSTS), 166–244 (NKVL…YARP), and 335–409 (SVVM…VSKQ). Residue K491 forms a Glycyl lysine isopeptide (Lys-Gly) (interchain with G-Cter in SUMO2) linkage.

As to quaternary structure, interacts with HNRNPL. Widely expressed. Detected in bone marrow stroma cells, skeletal muscle, heart, placenta, pancreas, kidney and lung.

Its function is as follows. RNA-binding protein that functions as a regulator of alternative splicing for multiple target mRNAs, including PTPRC/CD45 and STAT5A. Required for alternative splicing of PTPRC. In Homo sapiens (Human), this protein is Heterogeneous nuclear ribonucleoprotein L-like (HNRNPLL).